Here is a 366-residue protein sequence, read N- to C-terminus: Quinolinate synthase (366 aa).

The iminosuccinate site is built by His-44 and Ser-61. Cys-108 contributes to the [4Fe-4S] cluster binding site. Iminosuccinate is bound by residues 139–141 (YVN) and Ser-160. Cys-228 lines the [4Fe-4S] cluster pocket. Iminosuccinate is bound by residues 254–256 (HPE) and Thr-271. Cys-318 serves as a coordination point for [4Fe-4S] cluster.

This sequence belongs to the quinolinate synthase family. Type 3 subfamily. [4Fe-4S] cluster serves as cofactor.

It localises to the cytoplasm. It catalyses the reaction iminosuccinate + dihydroxyacetone phosphate = quinolinate + phosphate + 2 H2O + H(+). It functions in the pathway cofactor biosynthesis; NAD(+) biosynthesis; quinolinate from iminoaspartate: step 1/1. Catalyzes the condensation of iminoaspartate with dihydroxyacetone phosphate to form quinolinate. This Staphylococcus carnosus (strain TM300) protein is Quinolinate synthase.